The following is a 471-amino-acid chain: Glutamate--tRNA ligase (471 aa).

The 'HIGH' region signature appears at 9-19 (PSPTGFLHVGG). Zn(2+)-binding residues include Cys-98, Cys-100, Cys-125, and Asp-127. The 'KMSKS' region signature appears at 237 to 241 (KLSKR). Lys-240 contacts ATP.

It belongs to the class-I aminoacyl-tRNA synthetase family. Glutamate--tRNA ligase type 1 subfamily. In terms of assembly, monomer. The cofactor is Zn(2+).

It is found in the cytoplasm. It catalyses the reaction tRNA(Glu) + L-glutamate + ATP = L-glutamyl-tRNA(Glu) + AMP + diphosphate. In terms of biological role, catalyzes the attachment of glutamate to tRNA(Glu) in a two-step reaction: glutamate is first activated by ATP to form Glu-AMP and then transferred to the acceptor end of tRNA(Glu). The polypeptide is Glutamate--tRNA ligase (Aeromonas salmonicida (strain A449)).